A 667-amino-acid chain; its full sequence is Probable sulfate permease C320.05 (667 aa).

Residues 1–27 are disordered; it reads MSSPSENHLLGPKTSFIDNRTSTSRPL. The span at 16–25 shows a compositional bias: polar residues; it reads FIDNRTSTSR. 12 helical membrane-spanning segments follow: residues 77 to 97, 102 to 122, 162 to 182, 198 to 218, 240 to 260, 275 to 295, 301 to 321, 336 to 356, 368 to 388, 405 to 425, 433 to 453, and 465 to 485; these read IIWD…IALS, FLGV…ILYC, ILVT…AGLF, GCIL…FFGF, MSKA…LLIG, IVSI…SKKF, YGIA…LPLP, GVMC…AISL, LISL…PICG, VATI…MPVF, LASM…VEIF, and GIIF…GIIF. An STAS domain is found at 532–657; it reads SSTAVESAPR…DHVQDSIKKV (126 aa).

This sequence belongs to the SLC26A/SulP transporter (TC 2.A.53) family.

Its subcellular location is the endoplasmic reticulum membrane. Functionally, possible sulfate transporter. In Schizosaccharomyces pombe (strain 972 / ATCC 24843) (Fission yeast), this protein is Probable sulfate permease C320.05.